A 206-amino-acid chain; its full sequence is CBS domain-containing protein CBSX3, mitochondrial (206 aa).

The transit peptide at 1 to 39 directs the protein to the mitochondrion; sequence MQGVIRSFVSGGNVVKGSVLQHLRVINPAIQPSVFCSRS. 2 consecutive CBS domains span residues 61 to 127 and 136 to 194; these read MKSK…GRSS and MTEE…HREE.

The protein localises to the mitochondrion. The chain is CBS domain-containing protein CBSX3, mitochondrial (CBSX3) from Arabidopsis thaliana (Mouse-ear cress).